Reading from the N-terminus, the 410-residue chain is Putative transposase Rv3428c (410 aa).

In terms of domain architecture, Integrase catalytic spans 40–220 (VPRGPVDAGS…QPLRMFEAVE (181 aa)). Residues 390–410 (AANEPTTSSPASTAGGVPARP) are disordered.

Belongs to the transposase IS21/IS408/IS1162 family.

The protein is Putative transposase Rv3428c of Mycobacterium tuberculosis (strain ATCC 25618 / H37Rv).